A 309-amino-acid polypeptide reads, in one-letter code: Protoheme IX farnesyltransferase 2 (309 aa).

8 helical membrane-spanning segments follow: residues 35 to 55 (FKVV…APDV), 59 to 79 (MGVQ…AAVI), 107 to 127 (AHAL…LMLW), 131 to 151 (LTAI…TSFL), 159 to 179 (IVIG…SETG), 186 to 206 (WLLV…LAIA), 238 to 258 (LLAI…IYLI), and 289 to 309 (FSII…WLLL).

Belongs to the UbiA prenyltransferase family. Protoheme IX farnesyltransferase subfamily.

The protein localises to the cell inner membrane. The catalysed reaction is heme b + (2E,6E)-farnesyl diphosphate + H2O = Fe(II)-heme o + diphosphate. The protein operates within porphyrin-containing compound metabolism; heme O biosynthesis; heme O from protoheme: step 1/1. In terms of biological role, converts heme B (protoheme IX) to heme O by substitution of the vinyl group on carbon 2 of heme B porphyrin ring with a hydroxyethyl farnesyl side group. The sequence is that of Protoheme IX farnesyltransferase 2 from Pseudoalteromonas translucida (strain TAC 125).